The chain runs to 404 residues: Cysteine desulfurase IscS (404 aa).

Pyridoxal 5'-phosphate-binding positions include 75–76 (AT), N155, Q183, and 203–205 (SAH). Position 206 is an N6-(pyridoxal phosphate)lysine (K206). Residue T243 coordinates pyridoxal 5'-phosphate. C328 (cysteine persulfide intermediate) is an active-site residue. Residue C328 coordinates [2Fe-2S] cluster.

Belongs to the class-V pyridoxal-phosphate-dependent aminotransferase family. NifS/IscS subfamily. Homodimer. Forms a heterotetramer with IscU, interacts with other sulfur acceptors. Pyridoxal 5'-phosphate serves as cofactor.

The protein resides in the cytoplasm. It carries out the reaction (sulfur carrier)-H + L-cysteine = (sulfur carrier)-SH + L-alanine. It participates in cofactor biosynthesis; iron-sulfur cluster biosynthesis. Master enzyme that delivers sulfur to a number of partners involved in Fe-S cluster assembly, tRNA modification or cofactor biosynthesis. Catalyzes the removal of elemental sulfur atoms from cysteine to produce alanine. Functions as a sulfur delivery protein for Fe-S cluster synthesis onto IscU, an Fe-S scaffold assembly protein, as well as other S acceptor proteins. This Buchnera aphidicola subsp. Acyrthosiphon pisum (strain 5A) protein is Cysteine desulfurase IscS.